A 217-amino-acid chain; its full sequence is Large ribosomal subunit protein bL25 (217 aa).

The protein belongs to the bacterial ribosomal protein bL25 family. CTC subfamily. In terms of assembly, part of the 50S ribosomal subunit; part of the 5S rRNA/L5/L18/L25 subcomplex. Contacts the 5S rRNA. Binds to the 5S rRNA independently of L5 and L18.

In terms of biological role, this is one of the proteins that binds to the 5S RNA in the ribosome where it forms part of the central protuberance. The chain is Large ribosomal subunit protein bL25 from Methylobacterium sp. (strain 4-46).